The primary structure comprises 213 residues: MKNWKTSAEQILTAGPVVPVIVINKLEHAVPMAKALVAGGVRVLELTLRTECAVEAIRLIAQEVPDAIVGAGTVTNPQQLAEVTAAGAQFAISPGLTEPLLKAATEGTIPLIPGISTVSELMLGMDYGLREFKFFPAEANGGVKALQAIAGPFGKIRFCPTGGISLKNYRDYLALKSVLCVGGSWLVPADALESGDYDRITALAREAVAGATA.

The Proton acceptor role is filled by Glu45. Pyruvate contacts are provided by Arg49, Thr73, and Lys133. Lys133 (schiff-base intermediate with substrate) is an active-site residue.

The protein belongs to the KHG/KDPG aldolase family. As to quaternary structure, homotrimer.

It is found in the cytoplasm. The enzyme catalyses 2-dehydro-3-deoxy-6-phospho-D-gluconate = D-glyceraldehyde 3-phosphate + pyruvate. The protein operates within carbohydrate acid metabolism; 2-dehydro-3-deoxy-D-gluconate degradation; D-glyceraldehyde 3-phosphate and pyruvate from 2-dehydro-3-deoxy-D-gluconate: step 2/2. Functionally, involved in the degradation of glucose via the Entner-Doudoroff pathway. Catalyzes the reversible, stereospecific retro-aldol cleavage of 2-keto-3-deoxy-6-phosphogluconate (KDPG) to pyruvate and D-glyceraldehyde-3-phosphate. The polypeptide is 2-dehydro-3-deoxy-phosphogluconate aldolase (eda) (Dickeya dadantii (strain 3937) (Erwinia chrysanthemi (strain 3937))).